A 189-amino-acid chain; its full sequence is Interferon alpha-5 (189 aa).

The signal sequence occupies residues Met1 to Ser21. Intrachain disulfides connect Cys24–Cys122 and Cys52–Cys162.

Belongs to the alpha/beta interferon family.

The protein localises to the secreted. Its function is as follows. Produced by macrophages, IFN-alpha have antiviral activities. Interferon stimulates the production of two enzymes: a protein kinase and an oligoadenylate synthetase. This chain is Interferon alpha-5 (IFNA5), found in Homo sapiens (Human).